A 269-amino-acid polypeptide reads, in one-letter code: Hydroxyethylthiazole kinase (269 aa).

Methionine 45 is a substrate binding site. Residues arginine 121 and threonine 167 each coordinate ATP. Position 194 (glycine 194) interacts with substrate.

Belongs to the Thz kinase family. Mg(2+) is required as a cofactor.

The catalysed reaction is 5-(2-hydroxyethyl)-4-methylthiazole + ATP = 4-methyl-5-(2-phosphooxyethyl)-thiazole + ADP + H(+). It functions in the pathway cofactor biosynthesis; thiamine diphosphate biosynthesis; 4-methyl-5-(2-phosphoethyl)-thiazole from 5-(2-hydroxyethyl)-4-methylthiazole: step 1/1. Its function is as follows. Catalyzes the phosphorylation of the hydroxyl group of 4-methyl-5-beta-hydroxyethylthiazole (THZ). In Geobacillus sp. (strain WCH70), this protein is Hydroxyethylthiazole kinase.